Reading from the N-terminus, the 1758-residue chain is RanBP2-like and GRIP domain-containing protein 4 (1758 aa).

Ser21 carries the post-translational modification Phosphoserine. TPR repeat units lie at residues Pro60 to Gln93 and Gln584 to Ile617. A disordered region spans residues Asp761 to Ala805. The span at Ser779–Pro798 shows a compositional bias: low complexity. Residues His1037–Asp1173 enclose the RanBD1 1 domain. 2 disordered regions span residues Gln1213–Trp1249 and Ser1295–Gly1332. A compositionally biased stretch (polar residues) spans Ile1236 to Pro1245. Residues Ser1295–Leu1309 show a composition bias toward low complexity. Over residues Thr1318–Arg1330 the composition is skewed to acidic residues. Residues Tyr1334–Lys1470 form the RanBD1 2 domain. The segment covering Ser1583–Glu1594 has biased composition (polar residues). The interval Ser1583 to Leu1621 is disordered. A compositionally biased stretch (basic and acidic residues) spans Ser1595–Val1618. The region spanning Gln1703 to Val1753 is the GRIP domain.

The sequence is that of RanBP2-like and GRIP domain-containing protein 4 (RGPD4) from Homo sapiens (Human).